Consider the following 235-residue polypeptide: Ribonuclease 3 (235 aa).

The region spanning 7–135 (FAALEARLGH…VVAAVYLDGG (129 aa)) is the RNase III domain. E48 contacts Mg(2+). D52 is a catalytic residue. Residues D121 and E124 each coordinate Mg(2+). The active site involves E124. The DRBM domain occupies 160-229 (DPKTVLQEWA…ASAFLAREGV (70 aa)).

The protein belongs to the ribonuclease III family. As to quaternary structure, homodimer. It depends on Mg(2+) as a cofactor.

It localises to the cytoplasm. The catalysed reaction is Endonucleolytic cleavage to 5'-phosphomonoester.. In terms of biological role, digests double-stranded RNA. Involved in the processing of primary rRNA transcript to yield the immediate precursors to the large and small rRNAs (23S and 16S). Processes some mRNAs, and tRNAs when they are encoded in the rRNA operon. Processes pre-crRNA and tracrRNA of type II CRISPR loci if present in the organism. This Azorhizobium caulinodans (strain ATCC 43989 / DSM 5975 / JCM 20966 / LMG 6465 / NBRC 14845 / NCIMB 13405 / ORS 571) protein is Ribonuclease 3.